Here is a 490-residue protein sequence, read N- to C-terminus: MAGKQNQAAPKKAVAPRQQHYEFGGPIGAFGITFGLPILVHVFNLFCNDISGCPAPSLLHPKSLDLAQLKREIGWPDNGVFGLFSWSATLWTLGYYALSLVQYRFLPGHHVEGTELSTGGRLKYKLNAFNSAMCTLAILAAGTIAQGAEFPVWTFISDNFAQIISANILFAFALAIFVYVRSFDVKPGNKDMRQLAAGGVTGSLIYDFYIGRELNPRITLPLIGQVDIKEFMEMRPGLLGWIILNCAFIAKQYRLYGYVTDSILFITAIQAFYVFDGIYMEPAVLTTMDITTDGFGFMLSFGDVVWVPFMYSTQTRYLSVHPQQLGAFGLIAVGAVLAAGYSIFRLSNSQKNNFRTNPEDPSVKHLTYLQTKTGSRLITSGWWGIARHINYLGDWLQSWPYSLPTGIAGYQILSAGSNAPGAITMLDGREVVQGEARGWGIVFTYFYILYFAILLIHRDLRDDEKCSKKYGDDWEKYKKLVKWRIVPGIY.

The next 7 membrane-spanning stretches (helical) occupy residues 23–43 (FGGP…VHVF), 80–100 (VFGL…ALSL), 136–156 (LAIL…WTFI), 160–180 (FAQI…FVYV), 230–250 (EFME…AFIA), 255–275 (LYGY…FYVF), and 324–344 (QLGA…YSIF). Residues K351, R355, I378, W383, and 390–391 (NY) each bind NADP(+). Residues 436–456 (ARGWGIVFTYFYILYFAILLI) traverse the membrane as a helical segment. NADP(+) contacts are provided by residues D462, 466-470 (CSKKY), and Y477.

It belongs to the ERG4/ERG24 family.

The protein resides in the membrane. It catalyses the reaction 4,4-dimethyl-5alpha-cholesta-8,24-dien-3beta-ol + NADP(+) = 4,4-dimethyl-5alpha-cholesta-8,14,24-trien-3beta-ol + NADPH + H(+). It functions in the pathway steroid biosynthesis; zymosterol biosynthesis; zymosterol from lanosterol: step 2/6. Reduces the C14=C15 double bond of 4,4-dimethyl-cholesta-8,14,24-trienol to produce 4,4-dimethyl-cholesta-8,24-dienol. This is Delta(14)-sterol reductase (erg-3) from Neurospora crassa (strain ATCC 24698 / 74-OR23-1A / CBS 708.71 / DSM 1257 / FGSC 987).